We begin with the raw amino-acid sequence, 375 residues long: Aldehyde reductase FrzD (375 aa).

Positions 61, 103, and 171 each coordinate FMN. Tyr-176 acts as the Proton donor in catalysis. Lys-223, Gly-294, and Arg-319 together coordinate FMN.

The protein belongs to the NADH:flavin oxidoreductase/NADH oxidase family. It depends on FMN as a cofactor.

The catalysed reaction is (1S,4S)-4-[(4-hydroxyphenyl)methyl]-2,5-diazaspiro[bicyclo[3.2.1]octane-6,1'-cyclohexane]-2',5'-dien-4'-one + 2 NADPH + 2 H(+) = (1S,4S)-4-[(4-hydroxyphenyl)methyl]-2,5-diazaspiro[bicyclo[3.2.1]octane-6,1'-cyclohexan]-4'-one + 2 NADP(+). It functions in the pathway alkaloid biosynthesis; ergot alkaloid biosynthesis. Its function is as follows. Aldehyde reductase; part of the gene cluster that mediates the biosynthesis of the alkaloid (-)-FR901483, a potent immunosuppressant that shows efficacy in animal models and a probable inhibitor of purine nucleotide biosynthesis by targeting phosphoribosylpyrophosphate amidotransferase (PPAT). Within the pathway, FrzD reduces the dienone portion of the pathway intermediates to cyclohexanone. The biosynthesis of (-)-FR901483 starts with the condensation of two L-tyrosines to yield (S,S)-dityrosyl-piperazine. This process occurs in 3 steps with the non-canonical nonribosomal peptide synthetase FrzA catalyzing the reduction of L-tyrosine into L-tyrosinal, the spontaneous condensation of 2 L-tyrosinal units, and the subsequent reduction by the NmrA-like family domain-containing oxidoreductase FrzB. The cytochrome P450 monooxygenase FrzC then performs coupling between N10 and C1' to morph the piperazine into a 1,4-diazabicyclo[3.2.1]octane spiro-fused to a 2,5-cyclohexadienone. The dienone portion is further reduced to cyclohexanone by the flavin-dependent reductase FrzD. The methyltranserases (MTs) FrzE and FrzF are then involved in the methylation at the C10' amine and the C4 phenolic oxygen, respectively. The order of the two MTs appear to be interchangeable. Cleavage of the C9-N10' bond by the dioxygenase FrzG then leads to formation of a conjugated iminium. In addition to the oxidation of C9, an additional dehydrogenation between C7 and C8 can occur to give a likely shunt product. The next biosynthetic step is the intramolecular aldol condensation catalyzed by the newly identified aldolase FrzH to yield an aza-tricyclic product with the formation of a C9-C3' bond. The short-chain dehydrogenase/reductase FrzI then produces dephospho-(-)-FR901483 that is phosphorylated at C4'-OH into (-)-FR901483 by the phosphotransferase FrzJ. The only unassigned enzyme in the cluster is the second cytochrome P450 monooxygenase FrzL. The sequence is that of Aldehyde reductase FrzD from Cladobotryum sp.